Reading from the N-terminus, the 441-residue chain is COBRA-like protein 2 (441 aa).

The signal sequence occupies residues 1–28; the sequence is MNILFSRFSFLLLFLCSWTSFTFTTTEA. N-linked (GlcNAc...) asparagine glycosylation is found at N37, N162, N170, N209, N234, N249, N314, N329, and N348. N417 carries the GPI-anchor amidated asparagine lipid modification. Positions 418-441 are cleaved as a propeptide — removed in mature form; that stretch reads ASPNIATSPFVILLITFLSVLILM.

This sequence belongs to the COBRA family. Expressed in roots, stems, leaves, flowers and siliques.

The protein localises to the cell membrane. The sequence is that of COBRA-like protein 2 (COBL2) from Arabidopsis thaliana (Mouse-ear cress).